We begin with the raw amino-acid sequence, 231 residues long: PX domain-containing protein 1 (231 aa).

The PX domain occupies 1–134; sequence MASAVFEGTS…TFFERSPLDQ (134 aa).

The sequence is that of PX domain-containing protein 1 (PXDC1) from Bos taurus (Bovine).